The chain runs to 439 residues: tRNA modification GTPase MnmE (439 aa).

Residues R24, E81, and K121 each coordinate (6S)-5-formyl-5,6,7,8-tetrahydrofolate. The region spanning 218-363 (GFKVVIAGAP…LRDLIGRVVK (146 aa)) is the TrmE-type G domain. N228 provides a ligand contact to K(+). Residues 228-233 (NAGKSS), 247-253 (TDIAGTT), and 272-275 (DTAG) contribute to the GTP site. S232 is a Mg(2+) binding site. 3 residues coordinate K(+): T247, I249, and T252. Residue T253 coordinates Mg(2+). (6S)-5-formyl-5,6,7,8-tetrahydrofolate is bound at residue K439.

It belongs to the TRAFAC class TrmE-Era-EngA-EngB-Septin-like GTPase superfamily. TrmE GTPase family. In terms of assembly, homodimer. Heterotetramer of two MnmE and two MnmG subunits. K(+) serves as cofactor.

It is found in the cytoplasm. Exhibits a very high intrinsic GTPase hydrolysis rate. Involved in the addition of a carboxymethylaminomethyl (cmnm) group at the wobble position (U34) of certain tRNAs, forming tRNA-cmnm(5)s(2)U34. The sequence is that of tRNA modification GTPase MnmE from Rhizobium etli (strain CIAT 652).